Consider the following 1171-residue polypeptide: Kinesin-like protein GA13060 (1171 aa).

The disordered stretch occupies residues 1-24; the sequence is MASSISRNGGFCGALQRAPPPMPP. Residues 40-400 enclose the Kinesin motor domain; sequence KVKVMLRVSD…IQIASRIHRL (361 aa). Disordered stretches follow at residues 737 to 774, 798 to 820, 932 to 955, 1043 to 1099, and 1124 to 1143; these read LLGQ…GSRD, LVAS…SQRS, PAYR…SLPS, TSSE…QRHR, and RHSH…EGNG. The segment covering 805–816 has biased composition (basic residues); it reads SSHHQHQHHRPS. The segment covering 1043-1059 has biased composition (polar residues); the sequence is TSSEAYDSGHDSNSTPR. The segment covering 1124-1139 has biased composition (basic residues); sequence RHSHGVGGHKKHRHRH.

The protein belongs to the TRAFAC class myosin-kinesin ATPase superfamily. Kinesin family. KIF26 subfamily.

The protein resides in the cytoplasm. Its subcellular location is the cytoskeleton. The polypeptide is Kinesin-like protein GA13060 (Drosophila pseudoobscura pseudoobscura (Fruit fly)).